Consider the following 369-residue polypeptide: Peptide chain release factor 2 (369 aa).

Q249 carries the post-translational modification N5-methylglutamine.

It belongs to the prokaryotic/mitochondrial release factor family. Post-translationally, methylated by PrmC. Methylation increases the termination efficiency of RF2.

It is found in the cytoplasm. Its function is as follows. Peptide chain release factor 2 directs the termination of translation in response to the peptide chain termination codons UGA and UAA. This is Peptide chain release factor 2 from Thermosipho melanesiensis (strain DSM 12029 / CIP 104789 / BI429).